The sequence spans 652 residues: Carboxypeptidase Z (652 aa).

Positions 1 to 18 are cleaved as a signal peptide; the sequence is MPPPLPLLLLTVLVVAAA. In terms of domain architecture, FZ spans 27-160; it reads NPAGECHRPP…TREDEGCYDP (134 aa). Cystine bridges form between Cys43-Cys109, Cys51-Cys102, Cys93-Cys129, Cys118-Cys157, and Cys122-Cys146. In terms of domain architecture, Peptidase M14 spans 186-502; the sequence is SHHSYAQMVR…ESLLNFVETV (317 aa). Zn(2+) is bound by residues His248 and Glu251. An N-linked (GlcNAc...) asparagine glycan is attached at Asn281. His380 lines the Zn(2+) pocket. Residue Glu472 is the Proton donor/acceptor of the active site. The segment at 595 to 629 is disordered; the sequence is LRRTGPHDPLGGASSLGEATEPDPLRARRQPSADG.

The protein belongs to the peptidase M14 family. It depends on Zn(2+) as a cofactor. As to expression, in placenta, it is present within invasive trophoblasts and in the surrounding extracellular space. Also present in amnion cells, but is not readily apparent in the extracellular matrix of this cell type. Present in normal pituitary gland and neoplastic pituitary gland (especially POMC-, GH- and PRL-producing adenomas) (at protein level). Widely expressed.

The protein resides in the secreted. It is found in the extracellular space. Its subcellular location is the extracellular matrix. Inhibited by 2-mercaptomethyl-3-guanidinoethylthiopropanoic acid (MGTA) and guanidinoethylmercaptosuccinic acid (GEMSA). Inhibited by chelating agents such as EDTA and EGTA. Functionally, cleaves substrates with C-terminal arginine residues. Probably modulates the Wnt signaling pathway, by cleaving some undefined protein. May play a role in cleavage during prohormone processing. The protein is Carboxypeptidase Z (CPZ) of Homo sapiens (Human).